The sequence spans 76 residues: DNA-directed RNA polymerase subunit omega (76 aa).

It belongs to the RNA polymerase subunit omega family. As to quaternary structure, in cyanobacteria the RNAP catalytic core is composed of 2 alpha, 1 beta, 1 beta', 1 gamma and 1 omega subunit. When a sigma factor is associated with the core the holoenzyme is formed, which can initiate transcription.

It catalyses the reaction RNA(n) + a ribonucleoside 5'-triphosphate = RNA(n+1) + diphosphate. Its function is as follows. Promotes RNA polymerase assembly. Latches the N- and C-terminal regions of the beta' subunit thereby facilitating its interaction with the beta and alpha subunits. This Synechococcus elongatus (strain ATCC 33912 / PCC 7942 / FACHB-805) (Anacystis nidulans R2) protein is DNA-directed RNA polymerase subunit omega.